The following is a 416-amino-acid chain: Serine hydroxymethyltransferase (416 aa).

(6S)-5,6,7,8-tetrahydrofolate is bound by residues Leu118 and 122 to 124 (GHL). Lys226 bears the N6-(pyridoxal phosphate)lysine mark. Residues Glu242 and 350–352 (SPF) each bind (6S)-5,6,7,8-tetrahydrofolate.

It belongs to the SHMT family. Homodimer. Pyridoxal 5'-phosphate serves as cofactor.

The protein resides in the cytoplasm. The catalysed reaction is (6R)-5,10-methylene-5,6,7,8-tetrahydrofolate + glycine + H2O = (6S)-5,6,7,8-tetrahydrofolate + L-serine. The protein operates within one-carbon metabolism; tetrahydrofolate interconversion. It functions in the pathway amino-acid biosynthesis; glycine biosynthesis; glycine from L-serine: step 1/1. Catalyzes the reversible interconversion of serine and glycine with tetrahydrofolate (THF) serving as the one-carbon carrier. This reaction serves as the major source of one-carbon groups required for the biosynthesis of purines, thymidylate, methionine, and other important biomolecules. Also exhibits THF-independent aldolase activity toward beta-hydroxyamino acids, producing glycine and aldehydes, via a retro-aldol mechanism. This Wolinella succinogenes (strain ATCC 29543 / DSM 1740 / CCUG 13145 / JCM 31913 / LMG 7466 / NCTC 11488 / FDC 602W) (Vibrio succinogenes) protein is Serine hydroxymethyltransferase.